The chain runs to 216 residues: MRYITIALAKGRLAKKAMEIFEQIGIPCEEMKDEKTRKLIFTNEELGFRFFLSKPSDVPTYVEYGAADIGIVGKDTILEEGRSLYEVYDLQMGKCRMCVCGPESAREKLQHHELIRVASKYPNIAKDYFNNIKHQTVEIIKLNGSVELAPIVGLAEVIVDIVETGATLRENGLEVLEEVCPLSARMVVNQVSMKMEQERINKLINDVKKYIETQGR.

The protein belongs to the ATP phosphoribosyltransferase family. Short subfamily. As to quaternary structure, heteromultimer composed of HisG and HisZ subunits.

Its subcellular location is the cytoplasm. It catalyses the reaction 1-(5-phospho-beta-D-ribosyl)-ATP + diphosphate = 5-phospho-alpha-D-ribose 1-diphosphate + ATP. The protein operates within amino-acid biosynthesis; L-histidine biosynthesis; L-histidine from 5-phospho-alpha-D-ribose 1-diphosphate: step 1/9. In terms of biological role, catalyzes the condensation of ATP and 5-phosphoribose 1-diphosphate to form N'-(5'-phosphoribosyl)-ATP (PR-ATP). Has a crucial role in the pathway because the rate of histidine biosynthesis seems to be controlled primarily by regulation of HisG enzymatic activity. This chain is ATP phosphoribosyltransferase, found in Lachnospira eligens (strain ATCC 27750 / DSM 3376 / VPI C15-48 / C15-B4) (Eubacterium eligens).